A 685-amino-acid polypeptide reads, in one-letter code: DNA ligase (685 aa).

NAD(+) is bound by residues 47-51, 96-97, and Glu125; these read DSEYD and SL. The N6-AMP-lysine intermediate role is filled by Lys127. Arg148, Glu185, Lys304, and Lys328 together coordinate NAD(+). 4 residues coordinate Zn(2+): Cys422, Cys425, Cys440, and Cys446. Positions 605 to 685 constitute a BRCT domain; the sequence is AEAQPLKGQT…ELLALLAANA (81 aa).

The protein belongs to the NAD-dependent DNA ligase family. LigA subfamily. The cofactor is Mg(2+). Mn(2+) is required as a cofactor.

It catalyses the reaction NAD(+) + (deoxyribonucleotide)n-3'-hydroxyl + 5'-phospho-(deoxyribonucleotide)m = (deoxyribonucleotide)n+m + AMP + beta-nicotinamide D-nucleotide.. In terms of biological role, DNA ligase that catalyzes the formation of phosphodiester linkages between 5'-phosphoryl and 3'-hydroxyl groups in double-stranded DNA using NAD as a coenzyme and as the energy source for the reaction. It is essential for DNA replication and repair of damaged DNA. In Shewanella baltica (strain OS223), this protein is DNA ligase.